The following is a 253-amino-acid chain: Claudin domain-containing protein 1 (253 aa).

The chain crosses the membrane as a helical span at residues 5-25 (FATAFVIACVLSLISTIYMAA). Asparagine 42 and asparagine 72 each carry an N-linked (GlcNAc...) asparagine glycan. Helical transmembrane passes span 141–161 (FLLPFVSLGLMCFGALIGLCA), 175–195 (ILHLLAGLCTLGSVSCYVAGI), and 216–236 (FCLACVSAPLQFMASALFIWA).

Belongs to the PMP-22/EMP/MP20 family.

The protein localises to the cell junction. Its subcellular location is the tight junction. It is found in the cell membrane. Functionally, plays a role in negatively regulating the permeability of cells to small molecules. The sequence is that of Claudin domain-containing protein 1 (CLDND1) from Macaca fascicularis (Crab-eating macaque).